We begin with the raw amino-acid sequence, 98 residues long: Small ribosomal subunit protein bS20 (98 aa).

A compositionally biased stretch (basic residues) spans 1-12 (MAPRKPSKKVGP). A disordered region spans residues 1-31 (MAPRKPSKKVGPQKRPSAEKRVITSKKKQLR).

This sequence belongs to the bacterial ribosomal protein bS20 family.

Functionally, binds directly to 16S ribosomal RNA. The protein is Small ribosomal subunit protein bS20 of Chlamydia trachomatis serovar A (strain ATCC VR-571B / DSM 19440 / HAR-13).